The following is a 1066-amino-acid chain: Ribosomal protein S6 kinase delta-1 (1066 aa).

In terms of domain architecture, PX spans 8–132 (SADLARFYTV…DFFKGGIIND (125 aa)). The segment at 207–228 (VASDSEQSKTEEERESRSLFPG) is disordered. A compositionally biased stretch (basic and acidic residues) spans 212-223 (EQSKTEEERESR). The 29-residue stretch at 277–305 (VQGESSPTRREAVKRRTAEYLMRAESISS) folds into the MIT domain. Serine 282, serine 423, serine 427, serine 449, and serine 455 each carry phosphoserine. Positions 344–445 (GVIDKVLLVM…PTLAKVHLQQ (102 aa)) constitute a Protein kinase 1 domain. Positions 441-509 (VHLQQPTSSP…SGSSSEEECT (69 aa)) are disordered. Positions 448–458 (SSPQDSSSFES) are enriched in low complexity. Residues 474 to 483 (SSLTPSSQDD) show a composition bias toward polar residues. Positions 492–503 (DSSPKWPDSGSS) are enriched in low complexity. Residues serine 494, serine 528, serine 583, serine 605, serine 608, serine 640, serine 661, serine 664, serine 667, and serine 794 each carry the phosphoserine modification. The segment at 553-596 (HLAADSDSPSTQLRAHELKFFPNDDPEAVSSPRTSDSLSRSKNS) is disordered. Residues 582 to 593 (SSPRTSDSLSRS) show a composition bias toward low complexity. Residues 794–1056 (SSDPKFQGLG…VEDIKSHPFF (263 aa)) form the Protein kinase 2 domain. ATP-binding positions include 801-809 (GLGVVESAV) and arginine 820. Serine 872 is modified (phosphoserine). The active-site Proton acceptor is aspartate 929.

This sequence belongs to the protein kinase superfamily. Ser/Thr protein kinase family. S6 kinase subfamily. Interacts with SPHK1 and phosphatidylinositol 3-phosphate. Interacts (via PX domain) with PRDX3. In terms of tissue distribution, highly expressed in testis, skeletal muscle, brain, heart, placenta, kidney and liver and weakly expressed in thymus, small intestine, lung and colon.

The protein localises to the cytoplasm. The protein resides in the membrane. It localises to the early endosome. The catalysed reaction is L-seryl-[protein] + ATP = O-phospho-L-seryl-[protein] + ADP + H(+). It carries out the reaction L-threonyl-[protein] + ATP = O-phospho-L-threonyl-[protein] + ADP + H(+). May be involved in transmitting sphingosine-1 phosphate (SPP)-mediated signaling into the cell. Plays a role in the recruitment of PRDX3 to early endosomes. The polypeptide is Ribosomal protein S6 kinase delta-1 (RPS6KC1) (Homo sapiens (Human)).